Reading from the N-terminus, the 371-residue chain is Cytochrome b (371 aa).

4 helical membrane passes run 25-45 (FGSM…FLAI), 69-90 (WIMQ…YIHI), 105-125 (WLSG…GYVL), and 170-190 (FCAL…IHII). Residues His-75 and His-89 each coordinate heme b. Positions 174 and 188 each coordinate heme b. His-193 serves as a coordination point for a ubiquinone. 4 consecutive transmembrane segments (helical) span residues 218-238 (YKDF…LSVS), 280-300 (LGGT…PFTH), 312-332 (LSQT…WTAT), and 339-358 (FITI…IMNP).

This sequence belongs to the cytochrome b family. The cytochrome bc1 complex contains 3 respiratory subunits (MT-CYB, CYC1 and UQCRFS1), 2 core proteins (UQCRC1 and UQCRC2) and probably 6 low-molecular weight proteins. Heme b serves as cofactor.

Its subcellular location is the mitochondrion inner membrane. Component of the ubiquinol-cytochrome c reductase complex (complex III or cytochrome b-c1 complex) that is part of the mitochondrial respiratory chain. The b-c1 complex mediates electron transfer from ubiquinol to cytochrome c. Contributes to the generation of a proton gradient across the mitochondrial membrane that is then used for ATP synthesis. The protein is Cytochrome b (MT-CYB) of Micrurus tener microgalbineus (Spotted coral snake).